A 61-amino-acid polypeptide reads, in one-letter code: MWKLICIQLTTTTGLSESISTSELTITMNHKDCNPVFREEYFSVLNKVATSGFFTGERCAL.

Its function is as follows. The protein is truncated in this strain and presumably inactive. It has similarities with variola virus CrmB, but the product is inactivated due to several premature stop codon. The polypeptide is Truncated Cytokine response-modifying protein B (Bos taurus (Bovine)).